A 150-amino-acid chain; its full sequence is D-aminoacyl-tRNA deacylase (150 aa).

The short motif at 137-138 (GP) is the Gly-cisPro motif, important for rejection of L-amino acids element.

The protein belongs to the DTD family. In terms of assembly, homodimer.

It is found in the cytoplasm. The catalysed reaction is glycyl-tRNA(Ala) + H2O = tRNA(Ala) + glycine + H(+). The enzyme catalyses a D-aminoacyl-tRNA + H2O = a tRNA + a D-alpha-amino acid + H(+). In terms of biological role, an aminoacyl-tRNA editing enzyme that deacylates mischarged D-aminoacyl-tRNAs. Also deacylates mischarged glycyl-tRNA(Ala), protecting cells against glycine mischarging by AlaRS. Acts via tRNA-based rather than protein-based catalysis; rejects L-amino acids rather than detecting D-amino acids in the active site. By recycling D-aminoacyl-tRNA to D-amino acids and free tRNA molecules, this enzyme counteracts the toxicity associated with the formation of D-aminoacyl-tRNA entities in vivo and helps enforce protein L-homochirality. In Heliobacterium modesticaldum (strain ATCC 51547 / Ice1), this protein is D-aminoacyl-tRNA deacylase.